A 513-amino-acid chain; its full sequence is Na(+)/H(+) antiporter NhaB (513 aa).

Helical transmembrane passes span isoleucine 21–isoleucine 41, isoleucine 88–methionine 108, leucine 119–phenylalanine 139, phenylalanine 143–valine 163, valine 208–alanine 228, leucine 247–glycine 267, alanine 303–isoleucine 323, leucine 357–isoleucine 377, leucine 389–alanine 409, alanine 447–isoleucine 467, and methionine 477–leucine 497.

Belongs to the NhaB Na(+)/H(+) (TC 2.A.34) antiporter family.

The protein localises to the cell inner membrane. It catalyses the reaction 2 Na(+)(in) + 3 H(+)(out) = 2 Na(+)(out) + 3 H(+)(in). Its function is as follows. Na(+)/H(+) antiporter that extrudes sodium in exchange for external protons. The sequence is that of Na(+)/H(+) antiporter NhaB from Pasteurella multocida (strain Pm70).